Reading from the N-terminus, the 505-residue chain is Proton-coupled zinc antiporter SLC30A1 (505 aa).

Residues 1-10 lie on the Cytoplasmic side of the membrane; sequence MGCWGRNRGR. A helical membrane pass occupies residues 11-31; the sequence is LLCMLALTFMFMVLEVVVSRV. The Extracellular portion of the chain corresponds to 32 to 35; it reads TSSL. The helical transmembrane segment at 36–56 threads the bilayer; the sequence is AMLSDSFHMLSDVLALVVALV. Zn(2+) is bound by residues His-43 and Asp-47. At 57-80 the chain is on the cytoplasmic side; sequence AERFARRTHATQKNTFGWIRAEVM. Residues 81–101 traverse the membrane as a helical segment; it reads GALVNAIFLTGLCFAILLEAI. Residues 102–113 are Extracellular-facing; it reads ERFVEPHEMQQP. A helical membrane pass occupies residues 114 to 134; the sequence is LVVLGVGVAGLLVNVLGLCLF. The Cytoplasmic portion of the chain corresponds to 135–246; that stretch reads HHHSGFSQDS…RAGQLNMRGV (112 aa). Residues 142-215 form a disordered region; that stretch reads QDSGHSHSHG…DPEKPRSGDT (74 aa). Over residues 187-199 the composition is skewed to polar residues; that stretch reads TNTLVANTSNSNG. The segment covering 203–214 has biased composition (basic and acidic residues); that stretch reads DPADPEKPRSGD. The helical transmembrane segment at 247 to 267 threads the bilayer; that stretch reads FLHVLGDALGSVIVVVNALVF. Zn(2+)-binding residues include His-249 and Asp-253. At 268-306 the chain is on the extracellular side; sequence YFSWKGCSEGDFCVNPCFPDPCKAFVEIINSTHASVYEA. The N-linked (GlcNAc...) asparagine glycan is linked to Asn-297. A helical transmembrane segment spans residues 307 to 327; sequence GPCWVLYLDPTLCVVMVCILL. The Cytoplasmic segment spans residues 328 to 505; it reads YTTYPLLKES…MPNKQPESSL (178 aa). Ser-504 is modified (phosphoserine).

This sequence belongs to the cation diffusion facilitator (CDF) transporter (TC 2.A.4) family. SLC30A subfamily. In terms of assembly, homodimer. Interacts with TMEM163. Interacts and forms a complex with TMC6 and TMC8; the interaction regulates zinc transport into the ER.

Its subcellular location is the cell membrane. It is found in the basolateral cell membrane. The protein resides in the cytoplasmic vesicle membrane. The protein localises to the cytoplasm. It localises to the endoplasmic reticulum membrane. Its subcellular location is the golgi apparatus membrane. It is found in the nucleus membrane. The enzyme catalyses Zn(2+)(in) + 2 H(+)(out) = Zn(2+)(out) + 2 H(+)(in). Zinc ion:proton antiporter that could function at the plasma membrane mediating zinc efflux from cells against its electrochemical gradient protecting them from intracellular zinc accumulation and toxicity. Alternatively, could prevent the transport to the plasma membrane of CACNB2, the L-type calcium channels regulatory subunit, through a yet to be defined mechanism. By modulating the expression of these channels at the plasma membrane, could prevent calcium and zinc influx into cells. By the same mechanism, could also prevent L-type calcium channels-mediated heavy metal influx into cells. In some cells, could also function as a zinc ion:proton antiporter mediating zinc entry into the lumen of cytoplasmic vesicles. In macrophages, can increase zinc ions concentration into the lumen of cytoplasmic vesicles containing engulfed bacteria and could help inactivate them. Forms a complex with TMC6/EVER1 and TMC8/EVER2 at the ER membrane of keratynocytes which facilitates zinc uptake into the ER. Down-regulates the activity of transcription factors induced by zinc and cytokines. In Macaca fascicularis (Crab-eating macaque), this protein is Proton-coupled zinc antiporter SLC30A1.